The following is a 233-amino-acid chain: Octanoyltransferase (233 aa).

In terms of domain architecture, BPL/LPL catalytic spans 34 to 212 (PDRPDVLLLL…AFAQTFELDL (179 aa)). Substrate-binding positions include 76 to 83 (RGGEVTHH), 143 to 145 (AIG), and 156 to 158 (GFA). C174 functions as the Acyl-thioester intermediate in the catalytic mechanism.

It belongs to the LipB family.

Its subcellular location is the cytoplasm. The enzyme catalyses octanoyl-[ACP] + L-lysyl-[protein] = N(6)-octanoyl-L-lysyl-[protein] + holo-[ACP] + H(+). It participates in protein modification; protein lipoylation via endogenous pathway; protein N(6)-(lipoyl)lysine from octanoyl-[acyl-carrier-protein]: step 1/2. Its function is as follows. Catalyzes the transfer of endogenously produced octanoic acid from octanoyl-acyl-carrier-protein onto the lipoyl domains of lipoate-dependent enzymes. Lipoyl-ACP can also act as a substrate although octanoyl-ACP is likely to be the physiological substrate. The polypeptide is Octanoyltransferase (Synechococcus elongatus (strain ATCC 33912 / PCC 7942 / FACHB-805) (Anacystis nidulans R2)).